The following is a 37-amino-acid chain: Large ribosomal subunit protein bL36 (37 aa).

Belongs to the bacterial ribosomal protein bL36 family.

This Azoarcus sp. (strain BH72) protein is Large ribosomal subunit protein bL36.